Here is a 325-residue protein sequence, read N- to C-terminus: Acetyl-coenzyme A carboxylase carboxyl transferase subunit alpha (325 aa).

One can recognise a CoA carboxyltransferase C-terminal domain in the interval Gln-44–Glu-298.

This sequence belongs to the AccA family. As to quaternary structure, acetyl-CoA carboxylase is a heterohexamer composed of biotin carboxyl carrier protein (AccB), biotin carboxylase (AccC) and two subunits each of ACCase subunit alpha (AccA) and ACCase subunit beta (AccD).

It is found in the cytoplasm. The catalysed reaction is N(6)-carboxybiotinyl-L-lysyl-[protein] + acetyl-CoA = N(6)-biotinyl-L-lysyl-[protein] + malonyl-CoA. The protein operates within lipid metabolism; malonyl-CoA biosynthesis; malonyl-CoA from acetyl-CoA: step 1/1. Component of the acetyl coenzyme A carboxylase (ACC) complex. First, biotin carboxylase catalyzes the carboxylation of biotin on its carrier protein (BCCP) and then the CO(2) group is transferred by the carboxyltransferase to acetyl-CoA to form malonyl-CoA. The polypeptide is Acetyl-coenzyme A carboxylase carboxyl transferase subunit alpha (Acaryochloris marina (strain MBIC 11017)).